Consider the following 124-residue polypeptide: Small ribosomal subunit protein uS12 (124 aa).

Positions 1-24 are disordered; that stretch reads MPTINQLVRQGRKKSVKKTNTPAL. Asp-89 carries the post-translational modification 3-methylthioaspartic acid.

It belongs to the universal ribosomal protein uS12 family. As to quaternary structure, part of the 30S ribosomal subunit. Contacts proteins S8 and S17. May interact with IF1 in the 30S initiation complex.

Its function is as follows. With S4 and S5 plays an important role in translational accuracy. Interacts with and stabilizes bases of the 16S rRNA that are involved in tRNA selection in the A site and with the mRNA backbone. Located at the interface of the 30S and 50S subunits, it traverses the body of the 30S subunit contacting proteins on the other side and probably holding the rRNA structure together. The combined cluster of proteins S8, S12 and S17 appears to hold together the shoulder and platform of the 30S subunit. This chain is Small ribosomal subunit protein uS12, found in Desulfotalea psychrophila (strain LSv54 / DSM 12343).